A 288-amino-acid polypeptide reads, in one-letter code: Protoheme IX farnesyltransferase 2 (288 aa).

Transmembrane regions (helical) follow at residues 8-28 (ITKPGIIFGNLISVAAGFFLA), 36-56 (LMLFLTTLAGVGLVIASGCVV), 85-105 (VAFVYALAMLLLGTALLFQLV), 108-128 (LSAVVVLLGYVYYVFFYTMWY), 131-151 (NSVYGTLVGSISGAVPPLVGY), 152-172 (LAVTNFISLEAILLFTMFCLW), 211-231 (AYVVAFGAVSLGLFLLGEAGY), 233-252 (YLAVAAVVCLMWTKVTFRSI), and 267-287 (VSLLVVMGISGVLGVELIPLA).

This sequence belongs to the UbiA prenyltransferase family. Protoheme IX farnesyltransferase subfamily.

Its subcellular location is the cell inner membrane. It carries out the reaction heme b + (2E,6E)-farnesyl diphosphate + H2O = Fe(II)-heme o + diphosphate. It participates in porphyrin-containing compound metabolism; heme O biosynthesis; heme O from protoheme: step 1/1. Its function is as follows. Converts heme B (protoheme IX) to heme O by substitution of the vinyl group on carbon 2 of heme B porphyrin ring with a hydroxyethyl farnesyl side group. The polypeptide is Protoheme IX farnesyltransferase 2 (Vibrio parahaemolyticus serotype O3:K6 (strain RIMD 2210633)).